We begin with the raw amino-acid sequence, 456 residues long: Senecionine N-oxygenase (456 aa).

Positions 1–22 (MFRKFVIMLVLSLLVAAGISQA) are cleaved as a signal peptide. 32-37 (GAGYSG) contributes to the FAD binding site. 215–220 (GAGPSG) serves as a coordination point for NADP(+).

The protein belongs to the FMO family. In terms of assembly, homotetramer. FAD is required as a cofactor. In terms of tissue distribution, hemolymph.

The protein resides in the secreted. It carries out the reaction senecionine + NADPH + O2 = senecionine N-oxide + NADP(+) + H2O. Functionally, NADPH-dependent monooxygenase that detoxifies senecionine and similar plant alkaloids that are ingested by the larvae. Is active towards a narrow range of related substrates with highest activity towards senecionine, followed by seneciphylline, retrorsine, monocrotaline, senecivernine, axillarine and axillaridine. This chain is Senecionine N-oxygenase (sno1), found in Tyria jacobaeae (Cinnabar moth).